The sequence spans 104 residues: L-rhamnose mutarotase (104 aa).

Residue Tyr18 participates in substrate binding. His22 (proton donor) is an active-site residue. Substrate is bound by residues Tyr41 and 76 to 77 (WW).

This sequence belongs to the rhamnose mutarotase family. In terms of assembly, homodimer.

Its subcellular location is the cytoplasm. The enzyme catalyses alpha-L-rhamnose = beta-L-rhamnose. It participates in carbohydrate metabolism; L-rhamnose metabolism. Its function is as follows. Involved in the anomeric conversion of L-rhamnose. This Jannaschia sp. (strain CCS1) protein is L-rhamnose mutarotase.